We begin with the raw amino-acid sequence, 573 residues long: Proline--tRNA ligase (573 aa).

Belongs to the class-II aminoacyl-tRNA synthetase family. ProS type 1 subfamily. In terms of assembly, homodimer.

Its subcellular location is the cytoplasm. The enzyme catalyses tRNA(Pro) + L-proline + ATP = L-prolyl-tRNA(Pro) + AMP + diphosphate. Functionally, catalyzes the attachment of proline to tRNA(Pro) in a two-step reaction: proline is first activated by ATP to form Pro-AMP and then transferred to the acceptor end of tRNA(Pro). As ProRS can inadvertently accommodate and process non-cognate amino acids such as alanine and cysteine, to avoid such errors it has two additional distinct editing activities against alanine. One activity is designated as 'pretransfer' editing and involves the tRNA(Pro)-independent hydrolysis of activated Ala-AMP. The other activity is designated 'posttransfer' editing and involves deacylation of mischarged Ala-tRNA(Pro). The misacylated Cys-tRNA(Pro) is not edited by ProRS. The polypeptide is Proline--tRNA ligase (Cupriavidus necator (strain ATCC 17699 / DSM 428 / KCTC 22496 / NCIMB 10442 / H16 / Stanier 337) (Ralstonia eutropha)).